We begin with the raw amino-acid sequence, 460 residues long: Bifunctional protein GlmU (460 aa).

Residues 1-229 (MTNYAIILAA…FNESLGVNDR (229 aa)) form a pyrophosphorylase region. UDP-N-acetyl-alpha-D-glucosamine contacts are provided by residues 8 to 11 (LAAG), Lys-22, Gln-72, and 77 to 78 (GT). Asp-102 is a binding site for Mg(2+). UDP-N-acetyl-alpha-D-glucosamine contacts are provided by Gly-139, Glu-154, Asn-169, and Asn-227. Asn-227 lines the Mg(2+) pocket. The interval 230–250 (VALATAETVMRQRITQKHMVN) is linker. The interval 251–460 (GVTFQNPETV…RLAHHPSRSK (210 aa)) is N-acetyltransferase. Residues Arg-332 and Lys-350 each coordinate UDP-N-acetyl-alpha-D-glucosamine. His-362 functions as the Proton acceptor in the catalytic mechanism. The UDP-N-acetyl-alpha-D-glucosamine site is built by Tyr-365 and Asn-376. Acetyl-CoA contacts are provided by residues Ala-379, 385-386 (NY), Ser-404, Ala-422, and Arg-439.

The protein in the N-terminal section; belongs to the N-acetylglucosamine-1-phosphate uridyltransferase family. In the C-terminal section; belongs to the transferase hexapeptide repeat family. As to quaternary structure, homotrimer. Mg(2+) serves as cofactor.

The protein localises to the cytoplasm. The enzyme catalyses alpha-D-glucosamine 1-phosphate + acetyl-CoA = N-acetyl-alpha-D-glucosamine 1-phosphate + CoA + H(+). It catalyses the reaction N-acetyl-alpha-D-glucosamine 1-phosphate + UTP + H(+) = UDP-N-acetyl-alpha-D-glucosamine + diphosphate. The protein operates within nucleotide-sugar biosynthesis; UDP-N-acetyl-alpha-D-glucosamine biosynthesis; N-acetyl-alpha-D-glucosamine 1-phosphate from alpha-D-glucosamine 6-phosphate (route II): step 2/2. Its pathway is nucleotide-sugar biosynthesis; UDP-N-acetyl-alpha-D-glucosamine biosynthesis; UDP-N-acetyl-alpha-D-glucosamine from N-acetyl-alpha-D-glucosamine 1-phosphate: step 1/1. It functions in the pathway bacterial outer membrane biogenesis; LPS lipid A biosynthesis. Its function is as follows. Catalyzes the last two sequential reactions in the de novo biosynthetic pathway for UDP-N-acetylglucosamine (UDP-GlcNAc). The C-terminal domain catalyzes the transfer of acetyl group from acetyl coenzyme A to glucosamine-1-phosphate (GlcN-1-P) to produce N-acetylglucosamine-1-phosphate (GlcNAc-1-P), which is converted into UDP-GlcNAc by the transfer of uridine 5-monophosphate (from uridine 5-triphosphate), a reaction catalyzed by the N-terminal domain. This chain is Bifunctional protein GlmU, found in Streptococcus pyogenes serotype M12 (strain MGAS9429).